The chain runs to 887 residues: Valine--tRNA ligase (887 aa).

A 'HIGH' region motif is present at residues P47–H57. The 'KMSKS' region signature appears at K527 to S531. K530 is an ATP binding site. A coiled-coil region spans residues L817–K885.

Belongs to the class-I aminoacyl-tRNA synthetase family. ValS type 1 subfamily. In terms of assembly, monomer.

The protein localises to the cytoplasm. The catalysed reaction is tRNA(Val) + L-valine + ATP = L-valyl-tRNA(Val) + AMP + diphosphate. Its function is as follows. Catalyzes the attachment of valine to tRNA(Val). As ValRS can inadvertently accommodate and process structurally similar amino acids such as threonine, to avoid such errors, it has a 'posttransfer' editing activity that hydrolyzes mischarged Thr-tRNA(Val) in a tRNA-dependent manner. This is Valine--tRNA ligase from Geobacter sulfurreducens (strain ATCC 51573 / DSM 12127 / PCA).